The sequence spans 286 residues: Bifunctional protein FolD (286 aa).

Residues 165-167 (GRS) and Ser-190 contribute to the NADP(+) site.

The protein belongs to the tetrahydrofolate dehydrogenase/cyclohydrolase family. In terms of assembly, homodimer.

The catalysed reaction is (6R)-5,10-methylene-5,6,7,8-tetrahydrofolate + NADP(+) = (6R)-5,10-methenyltetrahydrofolate + NADPH. It carries out the reaction (6R)-5,10-methenyltetrahydrofolate + H2O = (6R)-10-formyltetrahydrofolate + H(+). Its pathway is one-carbon metabolism; tetrahydrofolate interconversion. Its function is as follows. Catalyzes the oxidation of 5,10-methylenetetrahydrofolate to 5,10-methenyltetrahydrofolate and then the hydrolysis of 5,10-methenyltetrahydrofolate to 10-formyltetrahydrofolate. This Staphylococcus aureus (strain JH9) protein is Bifunctional protein FolD.